A 633-amino-acid chain; its full sequence is MANQVNGNAVQLKEEEEPMDTSSVTHTEHYKTLIEAGLPQKVAERLDEIFQTGLVAYVDLDERAIDALREFNEEGALSVLQQFKESDLSHVQNKSAFLCGVMKTYRQREKQGSKVQESTKGPDEAKIKALLERTGYTLDVTTGQRKYGGPPPDSVYSGVQPGIGTEVFVGKIPRDLYEDELVPLFEKAGPIWDLRLMMDPLSGQNRGYAFITFCGKEAAQEAVKLCDSYEIRPGKHLGVCISVANNRLFVGSIPKNKTKENILEEFSKVTEGLVDVILYHQPDDKKKNRGFCFLEYEDHKSAAQARRRLMSGKVKVWGNVVTVEWADPVEEPDPEVMAKVKVLFVRNLATTVTEEILEKSFSEFGKLERVKKLKDYAFVHFEDRGAAVKAMDEMNGKEIEGEEIEIVLAKPPDKKRKERQAARQASRSTAYEDYYYHPPPRMPPPIRGRGRGGGRGGYGYPPDYYGYEDYYDDYYGYDYHDYRGGYEDPYYGYDDGYAVRGRGGGRGGRGAPPPPRGRGAPPPRGRAGYSQRGAPLGPPRGSRGGRGGPAQQQRGRGSRGSRGNRGGNVGGKRKADGYNQPDSKRRQTNNQQNWGSQPIAQQPLQQGGDYSGNYGYNNDNQEFYQDTYGQQWK.

A disordered region spans residues 1–24 (MANQVNGNAVQLKEEEEPMDTSSV). Residue alanine 2 is modified to N-acetylalanine. Residues lysine 13 and lysine 171 each participate in a glycyl lysine isopeptide (Lys-Gly) (interchain with G-Cter in SUMO2) cross-link. RRM domains lie at 165 to 244 (TEVF…ISVA), 246 to 328 (NRLF…WADP), and 341 to 411 (KVLF…LAKP). A Glycyl lysine isopeptide (Lys-Gly) (interchain with G-Cter in SUMO2) cross-link involves residue lysine 359. At lysine 366 the chain carries N6-acetyllysine. Positions 412 to 418 (PDKKRKE) match the Nuclear localization signal motif. Residues 412–456 (PDKKRKERQAARQASRSTAYEDYYYHPPPRMPPPIRGRGRGGGRG) are disordered. Over residues 437–446 (HPPPRMPPPI) the composition is skewed to pro residues. The RNA-binding RGG-box stretch occupies residues 447-567 (RGRGRGGGRG…SRGSRGNRGG (121 aa)). One copy of the 1; approximate repeat lies at 462-471 (PDYYGYEDYY). The 3 X 11 AA approximate repeats of D-D-Y-Y-G-Y-D-Y-H-D-Y stretch occupies residues 462 to 497 (PDYYGYEDYYDDYYGYDYHDYRGGYEDPYYGYDDGY). Repeat 2 spans residues 472-482 (DDYYGYDYHDY). One copy of the 3; approximate repeat lies at 488-497 (DPYYGYDDGY). Residues 501–510 (GRGGGRGGRG) are compositionally biased toward gly residues. The disordered stretch occupies residues 501–633 (GRGGGRGGRG…YQDTYGQQWK (133 aa)). The segment covering 511–524 (APPPPRGRGAPPPR) has biased composition (pro residues). Positions 525-541 (GRAGYSQRGAPLGPPRG) are enriched in low complexity. Positions 558 to 570 (SRGSRGNRGGNVG) are enriched in gly residues. Residues 588 to 604 (TNNQQNWGSQPIAQQPL) show a composition bias toward polar residues. Low complexity predominate over residues 605–621 (QQGGDYSGNYGYNNDNQ). Positions 622 to 633 (EFYQDTYGQQWK) are enriched in polar residues.

Identified in the spliceosome C complex. Identified in a IGF2BP1-dependent mRNP granule complex containing untranslated mRNAs. Interacts with GTPBP1.

The protein resides in the nucleus. It localises to the microsome. The protein localises to the nucleoplasm. It is found in the cytoplasm. Functionally, component of ribonucleosomes, which are complexes of at least 20 other different heterogeneous nuclear ribonucleoproteins (hnRNP). hnRNP play an important role in processing of precursor mRNA in the nucleus. The polypeptide is Heterogeneous nuclear ribonucleoprotein R (HNRNPR) (Homo sapiens (Human)).